A 449-amino-acid chain; its full sequence is MSHSASPKPATARRSEALTGEIRIPGDKSISHRSFMFGGLASGETRITGLLEGEDVINTGRAMQAMGAKIRKEGDVWIINGVGNGCLLQPEAALDFGNAGTGARLTMGLVGTYDMKTSFIGDASLSKRPMGRVLNPLREMGVQVEAADGDRMPLTLIGPKTANPITYRVPMASAQVKSAVLLAGLNTPGVTTVIEPVMTRDHTEKMLQGFGADLTVETDKDGVRHIRITGQGKLVGQTIDVPGDPSSTAFPLVAALLVEGSDVTIRNVLMNPTRTGLILTLQEMGADIEVLNARLAGGEDVADLRVRASKLKGVVVPPERAPSMIDEYPVLAIAASFAEGETVMDGLDELRVKESDRLAAVARGLEANGVDCTEGEMSLTVRGRPDGKGLGGGTVATHLDHRIAMSFLVMGLAAEKPVTVDDSNMIATSFPEFMDMMPGLGAKIELSIL.

Residues 1 to 23 (MSHSASPKPATARRSEALTGEIR) form a disordered region. 3-phosphoshikimate contacts are provided by K28, S29, and R33. Position 28 (K28) interacts with phosphoenolpyruvate. Residues G100 and R128 each contribute to the phosphoenolpyruvate site. Residues S173, Q175, D326, and K353 each contribute to the 3-phosphoshikimate site. Q175 contacts phosphoenolpyruvate. Catalysis depends on D326, which acts as the Proton acceptor. Positions 357 and 402 each coordinate phosphoenolpyruvate.

Belongs to the EPSP synthase family. As to quaternary structure, monomer.

It is found in the cytoplasm. It carries out the reaction 3-phosphoshikimate + phosphoenolpyruvate = 5-O-(1-carboxyvinyl)-3-phosphoshikimate + phosphate. It participates in metabolic intermediate biosynthesis; chorismate biosynthesis; chorismate from D-erythrose 4-phosphate and phosphoenolpyruvate: step 6/7. Catalyzes the transfer of the enolpyruvyl moiety of phosphoenolpyruvate (PEP) to the 5-hydroxyl of shikimate-3-phosphate (S3P) to produce enolpyruvyl shikimate-3-phosphate and inorganic phosphate. The protein is 3-phosphoshikimate 1-carboxyvinyltransferase of Pseudomonas sp. (strain PG2982).